Here is an 813-residue protein sequence, read N- to C-terminus: Leucine--tRNA ligase (813 aa).

A 'HIGH' region motif is present at residues 42 to 52 (PYTSGNLHIGH). The 'KMSKS' region motif lies at 580–584 (KMSKS). K583 is an ATP binding site.

It belongs to the class-I aminoacyl-tRNA synthetase family.

It is found in the cytoplasm. It catalyses the reaction tRNA(Leu) + L-leucine + ATP = L-leucyl-tRNA(Leu) + AMP + diphosphate. This chain is Leucine--tRNA ligase, found in Dehalococcoides mccartyi (strain ATCC BAA-2100 / JCM 16839 / KCTC 5957 / BAV1).